An 892-amino-acid chain; its full sequence is Translation initiation factor IF-2 (892 aa).

2 stretches are compositionally biased toward basic and acidic residues: residues 93–159 (VKRD…KDKV) and 166–216 (DMTK…EENK). The disordered stretch occupies residues 93 to 304 (VKRDPQEAER…SSLQQGFQKP (212 aa)). Residues 254 to 269 (GRGRNAKAARPAKKGK) are compositionally biased toward basic residues. Over residues 270–282 (HAESKADREEARA) the composition is skewed to basic and acidic residues. In terms of domain architecture, tr-type G spans 391-560 (PRAPVVTIMG…LLQAEVLELK (170 aa)). The tract at residues 400 to 407 (GHVDHGKT) is G1. Position 400–407 (400–407 (GHVDHGKT)) interacts with GTP. The G2 stretch occupies residues 425–429 (GITQH). The G3 stretch occupies residues 446–449 (DTPG). Residues 446-450 (DTPGH) and 500-503 (NKID) each bind GTP. Residues 500–503 (NKID) form a G4 region. Residues 536–538 (SAK) form a G5 region.

Belongs to the TRAFAC class translation factor GTPase superfamily. Classic translation factor GTPase family. IF-2 subfamily.

The protein localises to the cytoplasm. Its function is as follows. One of the essential components for the initiation of protein synthesis. Protects formylmethionyl-tRNA from spontaneous hydrolysis and promotes its binding to the 30S ribosomal subunits. Also involved in the hydrolysis of GTP during the formation of the 70S ribosomal complex. The polypeptide is Translation initiation factor IF-2 (Salmonella gallinarum (strain 287/91 / NCTC 13346)).